A 59-amino-acid polypeptide reads, in one-letter code: MMKIITFKIPEETLLLLDAYAIKHNMNRSEVIRLAIEKLVVDEMKNEPVPRARVEKIKF.

This is an uncharacterized protein from Sulfolobus islandicus rod-shaped virus 1 (SIRV-1).